A 215-amino-acid polypeptide reads, in one-letter code: Glutaredoxin 2 (215 aa).

The GST N-terminal domain maps to 1-77; the sequence is MKLYIYDHCP…YVDKLDGKPL (77 aa). Cys-9 and Cys-12 are disulfide-bonded.

It belongs to the glutaredoxin family.

In terms of biological role, involved in reducing some disulfides in a coupled system with glutathione reductase. Does not act as hydrogen donor for ribonucleotide reductase. This Escherichia coli O157:H7 protein is Glutaredoxin 2 (grxB).